Consider the following 200-residue polypeptide: GTP cyclohydrolase-2 (200 aa).

Position 49–53 (49–53 (RVHSE)) interacts with GTP. The Zn(2+) site is built by cysteine 54, cysteine 65, and cysteine 67. GTP-binding positions include glutamine 70, 92-94 (EGR), and threonine 114. Aspartate 126 serves as the catalytic Proton acceptor. The active-site Nucleophile is the arginine 128. GTP is bound by residues threonine 149 and lysine 154.

Belongs to the GTP cyclohydrolase II family. As to quaternary structure, homodimer. It depends on Zn(2+) as a cofactor.

The enzyme catalyses GTP + 4 H2O = 2,5-diamino-6-hydroxy-4-(5-phosphoribosylamino)-pyrimidine + formate + 2 phosphate + 3 H(+). Its pathway is cofactor biosynthesis; riboflavin biosynthesis; 5-amino-6-(D-ribitylamino)uracil from GTP: step 1/4. Functionally, catalyzes the conversion of GTP to 2,5-diamino-6-ribosylamino-4(3H)-pyrimidinone 5'-phosphate (DARP), formate and pyrophosphate. This Klebsiella pneumoniae subsp. pneumoniae (strain ATCC 700721 / MGH 78578) protein is GTP cyclohydrolase-2.